We begin with the raw amino-acid sequence, 321 residues long: Glutaminase (321 aa).

Residues serine 69, asparagine 120, glutamate 165, asparagine 172, tyrosine 196, tyrosine 248, and valine 266 each coordinate substrate.

This sequence belongs to the glutaminase family. Homotetramer.

It catalyses the reaction L-glutamine + H2O = L-glutamate + NH4(+). This is Glutaminase from Bacteroides thetaiotaomicron (strain ATCC 29148 / DSM 2079 / JCM 5827 / CCUG 10774 / NCTC 10582 / VPI-5482 / E50).